Consider the following 182-residue polypeptide: CDP-diacylglycerol--glycerol-3-phosphate 3-phosphatidyltransferase (182 aa).

The Cytoplasmic segment spans residues 2-12 (QFNIPTLLTLF). A helical transmembrane segment spans residues 13–37 (RVILIPFFVLVFYLPVTWSPFAAAL). Residues 38–60 (IFCVAAVTDWFDGFLARRWNQST) lie on the Periplasmic side of the membrane. A helical membrane pass occupies residues 61 to 81 (RFGAFLDPVADKVLVAIAMVL). Over 82 to 86 (VTEHY) the chain is Cytoplasmic. The helical transmembrane segment at 87 to 107 (HSWWVTLPAATMIAREIIISA) threads the bilayer. Residues 108–145 (LREWMAELGKRSSVAVSWIGKVKTTAQMVALAWLLWRP) lie on the Periplasmic side of the membrane. The chain crosses the membrane as a helical span at residues 146-168 (NIWVEYAGIALFFVAAVLTLWSM). Topologically, residues 169–181 (LQYLSAARADLLD) are cytoplasmic.

Belongs to the CDP-alcohol phosphatidyltransferase class-I family.

The protein localises to the cell inner membrane. It carries out the reaction a CDP-1,2-diacyl-sn-glycerol + sn-glycerol 3-phosphate = a 1,2-diacyl-sn-glycero-3-phospho-(1'-sn-glycero-3'-phosphate) + CMP + H(+). The protein operates within phospholipid metabolism; phosphatidylglycerol biosynthesis; phosphatidylglycerol from CDP-diacylglycerol: step 1/2. Its function is as follows. Catalyzes the conversion of cytidine diphosphate diacylglycerol (CDP-DG) and glycerol 3-phosphate into phosphatidylglycerol. Essential for the synthesis of anionic phospholipids, thereby playing a role in balancing the ratio of zwitterionic and anionic phospholipids, which is thought to be important for normal membrane function. In Shigella sonnei (strain Ss046), this protein is CDP-diacylglycerol--glycerol-3-phosphate 3-phosphatidyltransferase.